The following is a 424-amino-acid chain: Enolase (424 aa).

Glutamine 162 contributes to the (2R)-2-phosphoglycerate binding site. Glutamate 204 acts as the Proton donor in catalysis. Residues aspartate 241, glutamate 284, and aspartate 311 each coordinate Mg(2+). Residues lysine 336, arginine 365, serine 366, and lysine 387 each contribute to the (2R)-2-phosphoglycerate site. The active-site Proton acceptor is lysine 336.

The protein belongs to the enolase family. Mg(2+) serves as cofactor.

Its subcellular location is the cytoplasm. It localises to the secreted. The protein localises to the cell surface. It catalyses the reaction (2R)-2-phosphoglycerate = phosphoenolpyruvate + H2O. It functions in the pathway carbohydrate degradation; glycolysis; pyruvate from D-glyceraldehyde 3-phosphate: step 4/5. Its function is as follows. Catalyzes the reversible conversion of 2-phosphoglycerate (2-PG) into phosphoenolpyruvate (PEP). It is essential for the degradation of carbohydrates via glycolysis. This is Enolase from Rhizobium leguminosarum bv. trifolii (strain WSM2304).